Consider the following 373-residue polypeptide: SH3 domain-binding protein 5-like (373 aa).

Residues methionine 1–serine 36 are disordered. Coiled-coil stretches lie at residues alanine 35–arginine 98 and tryptophan 170–tyrosine 258. 2 disordered regions span residues alanine 274–threonine 308 and aspartate 332–leucine 373. Basic and acidic residues predominate over residues aspartate 332–glycine 360.

Belongs to the SH3BP5 family.

Its function is as follows. Functions as a guanine nucleotide exchange factor (GEF) for rab11a. This Xenopus laevis (African clawed frog) protein is SH3 domain-binding protein 5-like (sh3bp5l).